We begin with the raw amino-acid sequence, 231 residues long: Ribose-5-phosphate isomerase A (231 aa).

Residues 28–31, 83–86, and 96–99 contribute to the substrate site; these read TGST, DGAD, and KGGG. Glutamate 105 (proton acceptor) is an active-site residue. Lysine 123 is a binding site for substrate.

Belongs to the ribose 5-phosphate isomerase family. Homodimer.

It carries out the reaction aldehydo-D-ribose 5-phosphate = D-ribulose 5-phosphate. It functions in the pathway carbohydrate degradation; pentose phosphate pathway; D-ribose 5-phosphate from D-ribulose 5-phosphate (non-oxidative stage): step 1/1. In terms of biological role, catalyzes the reversible conversion of ribose-5-phosphate to ribulose 5-phosphate. The sequence is that of Ribose-5-phosphate isomerase A from Agrobacterium fabrum (strain C58 / ATCC 33970) (Agrobacterium tumefaciens (strain C58)).